The sequence spans 187 residues: Peptidoglycan-recognition protein 2 (187 aa).

Residues 1–19 form the signal peptide; the sequence is MKAFLVALVVAIELTLVFA. Intrachain disulfides connect Cys-21-Cys-144 and Cys-58-Cys-64. The 128-residue stretch at 43-170 folds into the N-acetylmuramoyl-L-alanine amidase domain; that stretch reads KPLKYVIIHH…RTVRPTDSPG (128 aa).

Belongs to the N-acetylmuramoyl-L-alanine amidase 2 family. In terms of tissue distribution, localizes to plasma (at protein level).

It is found in the secreted. In terms of biological role, peptidoglycan-recognition protein probably involved in innate immunity by binding to peptidoglycans (PGN) of bacteria and activating the prophenoloxidase (proPO) cascade immune response. Binds to 1,3-beta-D-glucan and PGN. The sequence is that of Peptidoglycan-recognition protein 2 (PGRP-2) from Holotrichia diomphalia (Korean black chafer).